The following is a 364-amino-acid chain: GDSL esterase/lipase At1g29660 (364 aa).

Residues 1-26 (MESYLRKWCLVSVWVLLLGLGFKVKA) form the signal peptide. Catalysis depends on Ser39, which acts as the Nucleophile. Catalysis depends on charge relay system residues Asp328 and His331.

Belongs to the 'GDSL' lipolytic enzyme family. As to expression, found in phloem exudates.

The protein localises to the secreted. It localises to the extracellular space. The protein resides in the apoplast. Functionally, involved in EDS1-dependent systemic acquired resistance, maybe in phloem-mediated long-distance signaling. The sequence is that of GDSL esterase/lipase At1g29660 from Arabidopsis thaliana (Mouse-ear cress).